The chain runs to 126 residues: Holo-[acyl-carrier-protein] synthase (126 aa).

Mg(2+) contacts are provided by Asp-9 and Glu-58.

The protein belongs to the P-Pant transferase superfamily. AcpS family. Mg(2+) serves as cofactor.

Its subcellular location is the cytoplasm. It catalyses the reaction apo-[ACP] + CoA = holo-[ACP] + adenosine 3',5'-bisphosphate + H(+). Functionally, transfers the 4'-phosphopantetheine moiety from coenzyme A to a Ser of acyl-carrier-protein. The chain is Holo-[acyl-carrier-protein] synthase from Citrobacter koseri (strain ATCC BAA-895 / CDC 4225-83 / SGSC4696).